A 200-amino-acid polypeptide reads, in one-letter code: Adenylyl-sulfate kinase (200 aa).

35-42 (GLPASGKS) contacts ATP. Residue Ser109 is the Phosphoserine intermediate of the active site.

It belongs to the APS kinase family.

The enzyme catalyses adenosine 5'-phosphosulfate + ATP = 3'-phosphoadenylyl sulfate + ADP + H(+). It functions in the pathway sulfur metabolism; hydrogen sulfide biosynthesis; sulfite from sulfate: step 2/3. In terms of biological role, catalyzes the synthesis of activated sulfate. This is Adenylyl-sulfate kinase from Thermodesulfovibrio yellowstonii (strain ATCC 51303 / DSM 11347 / YP87).